A 203-amino-acid polypeptide reads, in one-letter code: NADH dehydrogenase [ubiquinone] 1 alpha subcomplex assembly factor 4 (203 aa).

The protein belongs to the NDUFAF4 family. In terms of assembly, together with NdufAF3 associates with mitochondrial complex I assembly intermediates during its biogenesis.

Functionally, involved in the assembly of mitochondrial NADH:ubiquinone oxidoreductase complex (complex I). Together with NdufAF3, involved in biogenesis of complex 1 modules N, Q and P-peripheral, but not the P-distal module. Required for recruitment of the complex I assembly factor Timmdc1 to complex 1 assembly intermediates. This chain is NADH dehydrogenase [ubiquinone] 1 alpha subcomplex assembly factor 4, found in Drosophila melanogaster (Fruit fly).